A 305-amino-acid chain; its full sequence is Serine/threonine-protein phosphatase 6 catalytic subunit (305 aa).

D54, H56, D82, and N114 together coordinate Mn(2+). The active-site Proton donor is the H115. The Mn(2+) site is built by H164 and H238.

The protein belongs to the PPP phosphatase family. PP-6 (PP-V) subfamily. Requires Mn(2+) as cofactor.

It carries out the reaction O-phospho-L-seryl-[protein] + H2O = L-seryl-[protein] + phosphate. The catalysed reaction is O-phospho-L-threonyl-[protein] + H2O = L-threonyl-[protein] + phosphate. The chain is Serine/threonine-protein phosphatase 6 catalytic subunit (ppp6c) from Dictyostelium discoideum (Social amoeba).